A 202-amino-acid polypeptide reads, in one-letter code: NADH-quinone oxidoreductase subunit C (202 aa).

Belongs to the complex I 30 kDa subunit family. In terms of assembly, NDH-1 is composed of 14 different subunits. Subunits NuoB, C, D, E, F, and G constitute the peripheral sector of the complex.

Its subcellular location is the cell inner membrane. The enzyme catalyses a quinone + NADH + 5 H(+)(in) = a quinol + NAD(+) + 4 H(+)(out). In terms of biological role, NDH-1 shuttles electrons from NADH, via FMN and iron-sulfur (Fe-S) centers, to quinones in the respiratory chain. The immediate electron acceptor for the enzyme in this species is believed to be ubiquinone. Couples the redox reaction to proton translocation (for every two electrons transferred, four hydrogen ions are translocated across the cytoplasmic membrane), and thus conserves the redox energy in a proton gradient. The protein is NADH-quinone oxidoreductase subunit C of Acidovorax sp. (strain JS42).